Here is a 198-residue protein sequence, read N- to C-terminus: Charged multivesicular body protein 1a (198 aa).

2 coiled-coil regions span residues 7 to 41 and 176 to 198; these read QLKF…QQKN and GETS…ALRN. The tract at residues 171–198 is disordered; the sequence is GASALGETSARAQEKEDQLSRRLAALRN. The short motif at 187–197 is the MIT-interacting motif element; the sequence is DQLSRRLAALR.

This sequence belongs to the SNF7 family. In terms of assembly, probable peripherally associated component of the endosomal sorting required for transport complex III (ESCRT-III).

The protein localises to the cytoplasm. It is found in the endosome membrane. Functionally, probable peripherally associated component of the endosomal sorting required for transport complex III (ESCRT-III) which is involved in multivesicular bodies (MVBs) formation and sorting of endosomal cargo proteins into MVBs. MVBs contain intraluminal vesicles (ILVs) that are generated by invagination and scission from the limiting membrane of the endosome and mostly are delivered to lysosomes enabling degradation of membrane proteins, such as stimulated growth factor receptors, lysosomal enzymes and lipids. The sequence is that of Charged multivesicular body protein 1a (chmp1a) from Danio rerio (Zebrafish).